Consider the following 67-residue polypeptide: Protein AaeX (67 aa).

The next 2 helical transmembrane spans lie at 3 to 23 and 43 to 63; these read LFPV…ELLL and FVWH…YLIS.

The protein belongs to the AaeX family.

The protein localises to the cell membrane. The protein is Protein AaeX of Salmonella agona (strain SL483).